A 104-amino-acid polypeptide reads, in one-letter code: Large ribosomal subunit protein uL24 (104 aa).

Belongs to the universal ribosomal protein uL24 family. In terms of assembly, part of the 50S ribosomal subunit.

Its function is as follows. One of two assembly initiator proteins, it binds directly to the 5'-end of the 23S rRNA, where it nucleates assembly of the 50S subunit. Functionally, one of the proteins that surrounds the polypeptide exit tunnel on the outside of the subunit. In Clostridium botulinum (strain Alaska E43 / Type E3), this protein is Large ribosomal subunit protein uL24.